A 526-amino-acid polypeptide reads, in one-letter code: Glutamate--cysteine ligase (526 aa).

The protein belongs to the glutamate--cysteine ligase type 1 family. Type 1 subfamily.

The catalysed reaction is L-cysteine + L-glutamate + ATP = gamma-L-glutamyl-L-cysteine + ADP + phosphate + H(+). It participates in sulfur metabolism; glutathione biosynthesis; glutathione from L-cysteine and L-glutamate: step 1/2. The chain is Glutamate--cysteine ligase from Proteus mirabilis (strain HI4320).